Here is a 493-residue protein sequence, read N- to C-terminus: Angiopoietin-related protein 2 (493 aa).

Residues 1 to 22 (MRPLCVTCWWLGLLAAMGAVAG) form the signal peptide. Coiled coils occupy residues 76–115 (PEVL…VDGG) and 152–206 (ALEL…HCQR). Residues Asn164 and Asn192 are each glycosylated (N-linked (GlcNAc...) asparagine). The Fibrinogen C-terminal domain maps to 269–489 (DKPSGPWRDC…KVVMMIRPNP (221 aa)). 2 disulfide bridges follow: Cys278/Cys307 and Cys430/Cys443.

In terms of processing, N-glycosylated. Widely expressed in heart, small intestine, spleen and stomach. Also found in lower levels in colon, ovary, adrenal gland, skeletal muscle and in prostate.

It localises to the secreted. Functionally, induces sprouting in endothelial cells through an autocrine and paracrine action. This is Angiopoietin-related protein 2 (ANGPTL2) from Homo sapiens (Human).